Consider the following 423-residue polypeptide: Putative galacturan 1,4-alpha-galacturonidase C (423 aa).

Residues 1–20 (MRFSIISLVSLPLFLGLTYA) form the signal peptide. Asn-100, Asn-120, Asn-150, Asn-173, and Asn-185 each carry an N-linked (GlcNAc...) asparagine glycan. Asp-229 serves as the catalytic Proton donor. Cys-231 and Cys-248 form a disulfide bridge. Residue Asn-245 is glycosylated (N-linked (GlcNAc...) asparagine). Residue Asn-252 is part of the active site. N-linked (GlcNAc...) asparagine glycans are attached at residues Asn-344 and Asn-362. A disulfide bond links Cys-379 and Cys-385. Asn-400 carries N-linked (GlcNAc...) asparagine glycosylation. Cys-409 and Cys-423 form a disulfide bridge.

It belongs to the glycosyl hydrolase 28 family.

Its subcellular location is the secreted. It catalyses the reaction [(1-&gt;4)-alpha-D-galacturonosyl](n) + H2O = alpha-D-galacturonate + [(1-&gt;4)-alpha-D-galacturonosyl](n-1). Its function is as follows. Specific in hydrolyzing the terminal glycosidic bond of polygalacturonic acid and oligogalacturonates. This is Putative galacturan 1,4-alpha-galacturonidase C (rgxC) from Neosartorya fischeri (strain ATCC 1020 / DSM 3700 / CBS 544.65 / FGSC A1164 / JCM 1740 / NRRL 181 / WB 181) (Aspergillus fischerianus).